We begin with the raw amino-acid sequence, 532 residues long: Glucose-6-phosphate isomerase (532 aa).

Glu-330 (proton donor) is an active-site residue. Active-site residues include His-359 and Lys-461.

It belongs to the GPI family.

It localises to the cytoplasm. The catalysed reaction is alpha-D-glucose 6-phosphate = beta-D-fructose 6-phosphate. Its pathway is carbohydrate biosynthesis; gluconeogenesis. The protein operates within carbohydrate degradation; glycolysis; D-glyceraldehyde 3-phosphate and glycerone phosphate from D-glucose: step 2/4. Its function is as follows. Catalyzes the reversible isomerization of glucose-6-phosphate to fructose-6-phosphate. The chain is Glucose-6-phosphate isomerase from Synechococcus sp. (strain CC9902).